The sequence spans 55 residues: Methylmalonyl-CoA decarboxylase subunit epsilon (55 aa).

In terms of assembly, the methylmalonyl-CoA decarboxylase is composed of five subunits: the carboxyltransferase alpha subunit (MmdA), the tunnel beta subunit (MmdB), the biotin-containing gamma subunit (MmdC), and the delta (MmdD) and epsilon (MmdE) subunits.

It localises to the cell membrane. It catalyses the reaction (S)-methylmalonyl-CoA + Na(+)(in) + H(+)(out) = propanoyl-CoA + Na(+)(out) + CO2. Completely inhibited by avidin. Subunit of the sodium ion pump methylmalonyl-CoA decarboxylase, which converts the chemical energy of a decarboxylation reaction into an electrochemical gradient of Na(+) ions across the cytoplasmic membrane, thereby creating a sodium ion motive force that is used for ATP synthesis. The epsilon subunit seems not important for the catalysis of either decarboxylation or Na(+) transport, but it improves binding of the alpha subunit and plays an important role in stabilizing the methylmalonyl-CoA-decarboxylase enzyme complex. Can also convert malonyl-CoA into acetyl-CoA. The sequence is that of Methylmalonyl-CoA decarboxylase subunit epsilon from Veillonella parvula (Staphylococcus parvulus).